Consider the following 152-residue polypeptide: S-protein homolog 4 (152 aa).

The N-terminal stretch at 1–23 (MTTMLKTQVHVVVIYLLIQIAFS) is a signal peptide. Asn71 carries N-linked (GlcNAc...) asparagine glycosylation.

Belongs to the plant self-incompatibility (S1) protein family.

The protein localises to the secreted. The sequence is that of S-protein homolog 4 from Arabidopsis thaliana (Mouse-ear cress).